The primary structure comprises 120 residues: uncharacterized protein (120 aa).

2 consecutive transmembrane segments (helical) span residues 26-46 and 57-77; these read PSTS…PAGM and LLFA…LTLV.

Its subcellular location is the membrane. This is an uncharacterized protein from Saccharomyces cerevisiae (strain ATCC 204508 / S288c) (Baker's yeast).